The sequence spans 327 residues: tRNA uridine(34) hydroxylase (327 aa).

Positions 123-217 (SDPEVLVVDT…YLEEVPQEQS (95 aa)) constitute a Rhodanese domain. Catalysis depends on Cys-177, which acts as the Cysteine persulfide intermediate.

It belongs to the TrhO family.

It carries out the reaction uridine(34) in tRNA + AH2 + O2 = 5-hydroxyuridine(34) in tRNA + A + H2O. Catalyzes oxygen-dependent 5-hydroxyuridine (ho5U) modification at position 34 in tRNAs. This is tRNA uridine(34) hydroxylase from Vibrio cholerae serotype O1 (strain ATCC 39315 / El Tor Inaba N16961).